Reading from the N-terminus, the 307-residue chain is Ribonuclease HIII (307 aa).

Residues 93-307 (MSVIGSDEVG…ANTQKAKKWL (215 aa)) enclose the RNase H type-2 domain. A divalent metal cation is bound by residues aspartate 99, glutamate 100, and aspartate 204.

The protein belongs to the RNase HII family. RnhC subfamily. It depends on Mn(2+) as a cofactor. The cofactor is Mg(2+).

The protein resides in the cytoplasm. The enzyme catalyses Endonucleolytic cleavage to 5'-phosphomonoester.. Its function is as follows. Endonuclease that specifically degrades the RNA of RNA-DNA hybrids. The polypeptide is Ribonuclease HIII (Bacillus pumilus (strain SAFR-032)).